A 272-amino-acid chain; its full sequence is 3-methyl-2-oxobutanoate hydroxymethyltransferase (272 aa).

2 residues coordinate Mg(2+): D52 and D91. 3-methyl-2-oxobutanoate-binding positions include 52–53 (DS), D91, and K121. E123 serves as a coordination point for Mg(2+). The active-site Proton acceptor is E190.

It belongs to the PanB family. As to quaternary structure, homodecamer; pentamer of dimers. The cofactor is Mg(2+).

The protein localises to the cytoplasm. The enzyme catalyses 3-methyl-2-oxobutanoate + (6R)-5,10-methylene-5,6,7,8-tetrahydrofolate + H2O = 2-dehydropantoate + (6S)-5,6,7,8-tetrahydrofolate. It functions in the pathway cofactor biosynthesis; (R)-pantothenate biosynthesis; (R)-pantoate from 3-methyl-2-oxobutanoate: step 1/2. Functionally, catalyzes the reversible reaction in which hydroxymethyl group from 5,10-methylenetetrahydrofolate is transferred onto alpha-ketoisovalerate to form ketopantoate. The protein is 3-methyl-2-oxobutanoate hydroxymethyltransferase of Christiangramia forsetii (strain DSM 17595 / CGMCC 1.15422 / KT0803) (Gramella forsetii).